The primary structure comprises 476 residues: Aspartyl/glutamyl-tRNA(Asn/Gln) amidotransferase subunit B (476 aa).

The protein belongs to the GatB/GatE family. GatB subfamily. As to quaternary structure, heterotrimer of A, B and C subunits.

It catalyses the reaction L-glutamyl-tRNA(Gln) + L-glutamine + ATP + H2O = L-glutaminyl-tRNA(Gln) + L-glutamate + ADP + phosphate + H(+). It carries out the reaction L-aspartyl-tRNA(Asn) + L-glutamine + ATP + H2O = L-asparaginyl-tRNA(Asn) + L-glutamate + ADP + phosphate + 2 H(+). Allows the formation of correctly charged Asn-tRNA(Asn) or Gln-tRNA(Gln) through the transamidation of misacylated Asp-tRNA(Asn) or Glu-tRNA(Gln) in organisms which lack either or both of asparaginyl-tRNA or glutaminyl-tRNA synthetases. The reaction takes place in the presence of glutamine and ATP through an activated phospho-Asp-tRNA(Asn) or phospho-Glu-tRNA(Gln). This Listeria monocytogenes serovar 1/2a (strain ATCC BAA-679 / EGD-e) protein is Aspartyl/glutamyl-tRNA(Asn/Gln) amidotransferase subunit B.